Here is a 255-residue protein sequence, read N- to C-terminus: 5'-nucleotidase SurE (255 aa).

Residues D8, D9, S39, and N95 each contribute to the a divalent metal cation site.

The protein belongs to the SurE nucleotidase family. Requires a divalent metal cation as cofactor.

It localises to the cytoplasm. It carries out the reaction a ribonucleoside 5'-phosphate + H2O = a ribonucleoside + phosphate. Nucleotidase that shows phosphatase activity on nucleoside 5'-monophosphates. In Herpetosiphon aurantiacus (strain ATCC 23779 / DSM 785 / 114-95), this protein is 5'-nucleotidase SurE.